We begin with the raw amino-acid sequence, 583 residues long: Cationic amino acid transporter 6, chloroplastic (583 aa).

Residues 1–50 (MEVQSSSNNGGHSSFSSLRVYLNSLSATPSRLSRRAISVSTSSDEMSRVR) constitute a chloroplast transit peptide. 14 helical membrane-spanning segments follow: residues 63 to 83 (WYDL…FVTT), 91 to 111 (AGPS…LSAF), 132 to 152 (ITFG…DYVM), 186 to 206 (GFNE…VIIC), 216 to 236 (NMIM…MGFI), 255 to 275 (FFPF…LSYI), 294 to 314 (IPVG…LMAV), 347 to 367 (VVGI…MLGQ), 397 to 417 (ASTF…LNVL), 418 to 438 (LNLV…ALIF), 450 to 470 (WPTL…TLIW), 481 to 501 (FMLG…QCVV), 509 to 529 (LWGV…NIFL), and 541 to 561 (FGFF…HASS).

This sequence belongs to the amino acid-polyamine-organocation (APC) superfamily. Cationic amino acid transporter (CAT) (TC 2.A.3.3) family. Expressed in roots, stems, flowers, and leaves.

Its subcellular location is the plastid. The protein localises to the chloroplast membrane. Permease involved in the transport of the cationic neutral or acidic amino acids. The polypeptide is Cationic amino acid transporter 6, chloroplastic (CAT6) (Arabidopsis thaliana (Mouse-ear cress)).